The primary structure comprises 673 residues: NACHT, LRR and PYD domains-containing protein 10 (673 aa).

Residues 1 to 92 (MALARANSPQ…VDYLNQVCLN (92 aa)) form the Pyrin domain. The region spanning 163-469 (PIVVMQGSAG…AMSFLVKEDQ (307 aa)) is the NACHT domain. Position 169 to 176 (169 to 176 (GSAGTGKT)) interacts with ATP. The disordered stretch occupies residues 578–673 (SDKKKSVSVT…DGEMIDKMNG (96 aa)). The span at 584–597 (VSVTSSFSSGKVQS) shows a compositional bias: low complexity. A compositionally biased stretch (basic and acidic residues) spans 633–648 (ASREKGHMEMNDKEDG). Residues 649–658 (GVEEQEDEEG) are compositionally biased toward acidic residues. A compositionally biased stretch (basic and acidic residues) spans 659–673 (QTLKKDGEMIDKMNG).

It belongs to the NLRP family. As to quaternary structure, oligomerizes. Interacts with PYCARD. Also interacts with CASP1 and IL1B. Interacts with NOD1 and components of the NOD1 signaling pathway including RIPK2, NR2C2/TAK1 and IKBKG/NEMO. Expressed in skin, tongue, heart, colon and several cell lines of hematopoietic and myocytic origin but not in kidney, skeletal muscle, spleen, liver, lung, thymus, brain or small intestine (at protein level).

Its subcellular location is the cytoplasm. The protein resides in the cell membrane. In terms of biological role, inhibits autoprocessing of CASP1, CASP1-dependent IL1B secretion, PYCARD aggregation and PYCARD-mediated apoptosis but not apoptosis induced by FAS or BID. Displays anti-inflammatory activity. Required for immunity against C.albicans infection. Involved in the innate immune response by contributing to pro-inflammatory cytokine release in response to invasive bacterial infection. Contributes to T-cell-mediated inflammatory responses in the skin. Plays a role in protection against periodontitis through its involvement in induction of IL1A via ERK activation in oral epithelial cells infected with periodontal pathogens. Exhibits both ATPase and GTPase activities. The protein is NACHT, LRR and PYD domains-containing protein 10 (Nlrp10) of Mus musculus (Mouse).